A 250-amino-acid chain; its full sequence is Ribosomal RNA small subunit methyltransferase J (250 aa).

S-adenosyl-L-methionine is bound by residues 96 to 97 and aspartate 168; that span reads RD.

Belongs to the methyltransferase superfamily. RsmJ family.

It is found in the cytoplasm. It catalyses the reaction guanosine(1516) in 16S rRNA + S-adenosyl-L-methionine = N(2)-methylguanosine(1516) in 16S rRNA + S-adenosyl-L-homocysteine + H(+). Functionally, specifically methylates the guanosine in position 1516 of 16S rRNA. The chain is Ribosomal RNA small subunit methyltransferase J from Neisseria meningitidis serogroup C (strain 053442).